The primary structure comprises 430 residues: Asparagine--tRNA ligase (430 aa).

This sequence belongs to the class-II aminoacyl-tRNA synthetase family. As to quaternary structure, homodimer.

Its subcellular location is the cytoplasm. It carries out the reaction tRNA(Asn) + L-asparagine + ATP = L-asparaginyl-tRNA(Asn) + AMP + diphosphate + H(+). This Geobacillus thermodenitrificans (strain NG80-2) protein is Asparagine--tRNA ligase.